We begin with the raw amino-acid sequence, 511 residues long: Phospho-2-dehydro-3-deoxyheptonate aldolase 1, chloroplastic (511 aa).

Residues 1–49 constitute a chloroplast transit peptide; that stretch reads MALSNTLSLSSSKSLVQSHLLHNPTPQPRFSLFPTTQHGRRHPISAVHA.

The protein belongs to the class-II DAHP synthase family. As to expression, higher levels seen in the cotyledons than in the leaves and flowers. Lower levels seen in the roots and stems.

It localises to the plastid. Its subcellular location is the chloroplast. The catalysed reaction is D-erythrose 4-phosphate + phosphoenolpyruvate + H2O = 7-phospho-2-dehydro-3-deoxy-D-arabino-heptonate + phosphate. The protein operates within metabolic intermediate biosynthesis; chorismate biosynthesis; chorismate from D-erythrose 4-phosphate and phosphoenolpyruvate: step 1/7. May be involved in the synthesis of secondary metabolites derived from intermediates of the pre-chorismate pathway up to shikimate. The chain is Phospho-2-dehydro-3-deoxyheptonate aldolase 1, chloroplastic from Solanum lycopersicum (Tomato).